The primary structure comprises 227 residues: UPF0173 metal-dependent hydrolase Bcer98_3294 (227 aa).

Belongs to the UPF0173 family.

This is UPF0173 metal-dependent hydrolase Bcer98_3294 from Bacillus cytotoxicus (strain DSM 22905 / CIP 110041 / 391-98 / NVH 391-98).